Here is a 2282-residue protein sequence, read N- to C-terminus: Serine/threonine-protein kinase TEL1 (2282 aa).

One can recognise an FAT domain in the interval 1325–1844; the sequence is EIVNSALTLH…LYQISSLMRT (520 aa). Residues 1939-2250 enclose the PI3K/PI4K catalytic domain; the sequence is VLAQVIKAGG…LSGVKGKLAV (312 aa). Residues 1945–1951 are G-loop; the sequence is KAGGISH. Residues 2115 to 2123 form a catalytic loop region; sequence GIGDRHCNN. The tract at residues 2135–2159 is activation loop; sequence HIDLGISFDQGKNLTVPEKVPFRLT. In terms of domain architecture, FATC spans 2250–2282; sequence VRLSTEAVVRELIGEAVSVENLAVIFHGWTPFY.

It belongs to the PI3/PI4-kinase family. ATM subfamily. As to quaternary structure, associates with DNA double-strand breaks.

It localises to the nucleus. The protein resides in the chromosome. Its subcellular location is the telomere. The enzyme catalyses L-seryl-[protein] + ATP = O-phospho-L-seryl-[protein] + ADP + H(+). It catalyses the reaction L-threonyl-[protein] + ATP = O-phospho-L-threonyl-[protein] + ADP + H(+). In terms of biological role, serine/threonine protein kinase which activates checkpoint signaling upon genotoxic stresses such as ionizing radiation (IR), ultraviolet light (UV), or DNA replication stalling, thereby acting as a DNA damage sensor. Recognizes the substrate consensus sequence [ST]-Q. Phosphorylates histone H2A to form H2AS128ph (gamma-H2A) at sites of DNA damage, involved in the regulation of DNA damage response mechanism. Required for the control of telomere length and genome stability. The polypeptide is Serine/threonine-protein kinase TEL1 (TEL1) (Yarrowia lipolytica (strain CLIB 122 / E 150) (Yeast)).